A 324-amino-acid polypeptide reads, in one-letter code: MKPSVILYKALPDDLLQRLQAHFTVHQVANLSPQTVVQNAAIFAEAEGLLGSNENVDAALLEKMPKLRATSTISVGYDNFDVDALTARKILLMHTPTVLTETVADTLMALVLSTARRVVEVAERVKAGEWTASIGPDWYGTDVHHKTLGIVGMGRIGMALAQRAHFGFNMPILYNARRHHKEAEERFNARYCDLDTLLQESDFVCLILPLTDETHHLFGAEQFAKMKSSAIFINAGRGPVVDENALIAALQKGEIHVAGLDVFEQEPLSVDSPLLSMANVVAVPHIGSATHETRYGMAACAVDNLIDALQGKVEKNCVNPHVAD.

Active-site residues include Arg-237 and Glu-266. His-285 functions as the Proton donor in the catalytic mechanism.

This sequence belongs to the D-isomer specific 2-hydroxyacid dehydrogenase family. GhrB subfamily. In terms of assembly, homodimer.

It is found in the cytoplasm. The enzyme catalyses glycolate + NADP(+) = glyoxylate + NADPH + H(+). It carries out the reaction (R)-glycerate + NAD(+) = 3-hydroxypyruvate + NADH + H(+). The catalysed reaction is (R)-glycerate + NADP(+) = 3-hydroxypyruvate + NADPH + H(+). Its function is as follows. Catalyzes the NADPH-dependent reduction of glyoxylate and hydroxypyruvate into glycolate and glycerate, respectively. This Shigella flexneri serotype 5b (strain 8401) protein is Glyoxylate/hydroxypyruvate reductase B.